Reading from the N-terminus, the 343-residue chain is MKLKTKTMEWSGDSLKLLDQRKLPFIEEYVECKTHEEVAHAIKEMIVRGAPAIGVTAAFGYVLGLRDYKTGSLTDWMKQVKETLARTRPTAVNLFWALNRMEKVFFENVDRENLFEILENEALKMAYEDIEVNKAIGKNGAQLIKDGSTILTHCNAGALATVDYGTALGVIRAAMESGKRIRVFADETRPYLQGARLTAWELMKDGIEVYVITDNMAGWLMKKGLIDAVVVGADRIALNGDTANKIGTYSLAVLAKRNNIPFYVAAPVSTIDPTIKSGEEIPIEERRPEEVTHCGGNRIAPEGVKVLNPAFDVTENTLITAIITEKGVIRPPFEENIKKILGV.

Substrate contacts are provided by residues 48–50 (RGA), Arg88, and Gln193. Asp234 functions as the Proton donor in the catalytic mechanism. 244-245 (NK) is a substrate binding site.

Belongs to the eIF-2B alpha/beta/delta subunits family. MtnA subfamily.

It carries out the reaction 5-(methylsulfanyl)-alpha-D-ribose 1-phosphate = 5-(methylsulfanyl)-D-ribulose 1-phosphate. Its pathway is amino-acid biosynthesis; L-methionine biosynthesis via salvage pathway; L-methionine from S-methyl-5-thio-alpha-D-ribose 1-phosphate: step 1/6. In terms of biological role, catalyzes the interconversion of methylthioribose-1-phosphate (MTR-1-P) into methylthioribulose-1-phosphate (MTRu-1-P). The polypeptide is Methylthioribose-1-phosphate isomerase (Thermotoga petrophila (strain ATCC BAA-488 / DSM 13995 / JCM 10881 / RKU-1)).